Consider the following 499-residue polypeptide: MVLLYSQASWDQRSKADALVLPFWMKNSKAQEAAVVDEDYKLVYQNALSNFSGKKGETAFLFGNDHTKEQKIVLLGLGKSEEVSGTTVLEAYAQATTVLRKAKCKTVNILFPTISQLRFSVEEFLTNLAAGVLSLNYNYPTYHKVDTSLPFLEKVTVMGIVSKVGDKIFRKEESLFEGVYLTRDLVNTNADEVTPEKLAAVAKGLAGEFASLDVKILDRKAILKEKMGLLAAVAKGAAVEPRFIVLDYQGKPKSKDRTVLIGKGVTFDSGGLDLKPGKAMITMKEDMAGAATVLGIFSALASLELPINVTGIIPATENAIGSAAYKMGDVYVGMTGLSVEIGSTDAEGRLILADAISYALKYCNPTRIIDFATLTGAMVVSLGESVAGFFANNDVLARDLAEASSETGEALWRMPLVEKYDQALHSDIADMKNIGSNRAGSITAALFLQRFLEDNPVAWAHLDIAGTAYHEKEELPYPKYATGFGVRCLIHYMEKFLSK.

2 residues coordinate Mn(2+): Lys-263 and Asp-268. Residue Lys-275 is part of the active site. Residues Asp-286, Asp-345, and Glu-347 each coordinate Mn(2+). Arg-349 is a catalytic residue.

This sequence belongs to the peptidase M17 family. Mn(2+) is required as a cofactor.

It localises to the cytoplasm. The catalysed reaction is Release of an N-terminal amino acid, Xaa-|-Yaa-, in which Xaa is preferably Leu, but may be other amino acids including Pro although not Arg or Lys, and Yaa may be Pro. Amino acid amides and methyl esters are also readily hydrolyzed, but rates on arylamides are exceedingly low.. It carries out the reaction Release of an N-terminal amino acid, preferentially leucine, but not glutamic or aspartic acids.. Functionally, presumably involved in the processing and regular turnover of intracellular proteins. Catalyzes the removal of unsubstituted N-terminal amino acids from various peptides. The chain is Probable cytosol aminopeptidase from Chlamydia trachomatis serovar L2 (strain ATCC VR-902B / DSM 19102 / 434/Bu).